A 380-amino-acid polypeptide reads, in one-letter code: Cytochrome b (380 aa).

4 helical membrane-spanning segments follow: residues 34–54 (FGSL…LLAM), 78–99 (WLIR…FLHI), 114–134 (WNTG…GYVL), and 179–199 (FFAL…THLM). Histidine 84 and histidine 98 together coordinate heme b. Heme b-binding residues include histidine 183 and histidine 197. Histidine 202 contacts a ubiquinone. The next 4 helical transmembrane spans lie at 227–247 (LKDI…ALFS), 289–309 (LGGV…PFLH), 321–341 (LSQA…WVGS), and 348–368 (FIII…SLLP).

It belongs to the cytochrome b family. The cytochrome bc1 complex contains 11 subunits: 3 respiratory subunits (MT-CYB, CYC1 and UQCRFS1), 2 core proteins (UQCRC1 and UQCRC2) and 6 low-molecular weight proteins (UQCRH/QCR6, UQCRB/QCR7, UQCRQ/QCR8, UQCR10/QCR9, UQCR11/QCR10 and a cleavage product of UQCRFS1). This cytochrome bc1 complex then forms a dimer. Requires heme b as cofactor.

Its subcellular location is the mitochondrion inner membrane. Component of the ubiquinol-cytochrome c reductase complex (complex III or cytochrome b-c1 complex) that is part of the mitochondrial respiratory chain. The b-c1 complex mediates electron transfer from ubiquinol to cytochrome c. Contributes to the generation of a proton gradient across the mitochondrial membrane that is then used for ATP synthesis. The chain is Cytochrome b (MT-CYB) from Crossoptilon crossoptilon (White-eared pheasant).